Reading from the N-terminus, the 447-residue chain is Protein cortex (447 aa).

WD repeat units lie at residues 108-148, 149-188, 198-237, 281-325, 344-380, and 384-423; these read TYSY…IGHG, FAEY…KIMS, NMNC…ISWR, DSDW…VRDT, GELV…DQWG, and SGLD…NKMK. A D-box motif is present at residues 384-395; sequence SGLDRVRTMIFS.

This sequence belongs to the WD repeat CORT family.

It localises to the cytoplasm. Functionally, controls wing pigmentation patterning by regulating scale cell development, thereby playing a key role in mimicry and crypsis. Probably acts as an activator of the anaphase promoting complex/cyclosome (APC/C) that promotes the ubiquitin ligase activity and substrate specificity of the APC/C. The protein is Protein cortex of Heliconius melpomene (Postman butterfly).